The primary structure comprises 344 residues: Nuclear distribution protein nudE-like 1-A (344 aa).

Residues 26-187 (YKKSYKEAQE…RQELAVRDTR (162 aa)) are a coiled coil. Residues 181 to 190 (LAVRDTRSEV) show a composition bias toward basic and acidic residues. Disordered regions lie at residues 181–209 (LAVR…TDSA) and 322–344 (PGDG…VLSV).

Belongs to the nudE family. Post-translationally, phosphorylated in mitosis.

It is found in the cytoplasm. It localises to the cytoskeleton. The protein resides in the microtubule organizing center. The protein localises to the centrosome. Its subcellular location is the spindle. Required for organization of the cellular microtubule array and microtubule anchoring at the centrosome. Positively regulates the activity of the minus-end directed microtubule motor protein dynein. May enhance dynein-mediated microtubule sliding by targeting dynein to the microtubule plus end. This is Nuclear distribution protein nudE-like 1-A (ndel1a) from Danio rerio (Zebrafish).